The primary structure comprises 330 residues: Succinylglutamate desuccinylase (330 aa).

Zn(2+) contacts are provided by histidine 53, glutamate 56, and histidine 147. Glutamate 210 is a catalytic residue.

It belongs to the AspA/AstE family. Succinylglutamate desuccinylase subfamily. Zn(2+) is required as a cofactor.

The catalysed reaction is N-succinyl-L-glutamate + H2O = L-glutamate + succinate. The protein operates within amino-acid degradation; L-arginine degradation via AST pathway; L-glutamate and succinate from L-arginine: step 5/5. In terms of biological role, transforms N(2)-succinylglutamate into succinate and glutamate. The sequence is that of Succinylglutamate desuccinylase from Yersinia pseudotuberculosis serotype O:3 (strain YPIII).